Reading from the N-terminus, the 371-residue chain is Chorismate synthase (371 aa).

2 residues coordinate NADP(+): Arg48 and Arg54. Residues 132-134, 244-245, Gly289, 304-308, and Arg330 contribute to the FMN site; these read RSS, NA, and KPTSS.

Belongs to the chorismate synthase family. In terms of assembly, homotetramer. Requires FMNH2 as cofactor.

It catalyses the reaction 5-O-(1-carboxyvinyl)-3-phosphoshikimate = chorismate + phosphate. Its pathway is metabolic intermediate biosynthesis; chorismate biosynthesis; chorismate from D-erythrose 4-phosphate and phosphoenolpyruvate: step 7/7. Catalyzes the anti-1,4-elimination of the C-3 phosphate and the C-6 proR hydrogen from 5-enolpyruvylshikimate-3-phosphate (EPSP) to yield chorismate, which is the branch point compound that serves as the starting substrate for the three terminal pathways of aromatic amino acid biosynthesis. This reaction introduces a second double bond into the aromatic ring system. The sequence is that of Chorismate synthase from Methylobacterium nodulans (strain LMG 21967 / CNCM I-2342 / ORS 2060).